Reading from the N-terminus, the 411-residue chain is Na(+)-translocating NADH-quinone reductase subunit B (411 aa).

A run of 3 helical transmembrane segments spans residues 56 to 76 (IMITVWLCTFPAMFFGMYNAG), 121 to 141 (FLPIYLVTFAVGGFWEVLFAV), and 161 to 181 (ILPATIPLWQVALGITFGVVI). Residue T228 is modified to FMN phosphoryl threonine. 5 helical membrane passes run 254–274 (FIPGSVGETSTLAILIGAAVL), 284–304 (IMLGVFVGMALTAMLFTAIGS), 309–329 (MFGMPWYWHLVLGGFAFGMVF), 345–365 (LLFGFLIGVMTVLIRVVNPAF), and 368–388 (GIMLAILFANLFAPMIDHFFV).

Belongs to the NqrB/RnfD family. As to quaternary structure, composed of six subunits; NqrA, NqrB, NqrC, NqrD, NqrE and NqrF. Requires FMN as cofactor.

The protein localises to the cell inner membrane. The catalysed reaction is a ubiquinone + n Na(+)(in) + NADH + H(+) = a ubiquinol + n Na(+)(out) + NAD(+). In terms of biological role, NQR complex catalyzes the reduction of ubiquinone-1 to ubiquinol by two successive reactions, coupled with the transport of Na(+) ions from the cytoplasm to the periplasm. NqrA to NqrE are probably involved in the second step, the conversion of ubisemiquinone to ubiquinol. The chain is Na(+)-translocating NADH-quinone reductase subunit B from Chromohalobacter salexigens (strain ATCC BAA-138 / DSM 3043 / CIP 106854 / NCIMB 13768 / 1H11).